A 270-amino-acid chain; its full sequence is 3-phenylpropionate-dihydrodiol/cinnamic acid-dihydrodiol dehydrogenase (270 aa).

10 to 34 (FITGGGSGLGLALVERFIEEGAQVA) serves as a coordination point for NAD(+). Ser-143 provides a ligand contact to substrate. The active-site Proton acceptor is Tyr-156.

Belongs to the short-chain dehydrogenases/reductases (SDR) family.

It carries out the reaction 3-(cis-5,6-dihydroxycyclohexa-1,3-dien-1-yl)propanoate + NAD(+) = 3-(2,3-dihydroxyphenyl)propanoate + NADH + H(+). It catalyses the reaction (2E)-3-(cis-5,6-dihydroxycyclohexa-1,3-dien-1-yl)prop-2-enoate + NAD(+) = (2E)-3-(2,3-dihydroxyphenyl)prop-2-enoate + NADH + H(+). Its pathway is aromatic compound metabolism; 3-phenylpropanoate degradation. Converts 3-phenylpropionate-dihydrodiol (PP-dihydrodiol) and cinnamic acid-dihydrodiol (CI-dihydrodiol) into 3-(2,3-dihydroxylphenyl)propanoic acid (DHPP) and 2,3-dihydroxicinnamic acid (DHCI), respectively. The chain is 3-phenylpropionate-dihydrodiol/cinnamic acid-dihydrodiol dehydrogenase from Escherichia coli O8 (strain IAI1).